We begin with the raw amino-acid sequence, 313 residues long: Protein FixB (313 aa).

An FAD-binding site is contributed by 255-283 (LYLAVGISGQIQHMVGANASQTIFAINKD).

This sequence belongs to the ETF alpha-subunit/FixB family. Heterodimer of FixA and FixB.

It functions in the pathway amine and polyamine metabolism; carnitine metabolism. Its function is as follows. Required for anaerobic carnitine reduction. May bring reductant to CaiA. This is Protein FixB from Shigella dysenteriae serotype 1 (strain Sd197).